The primary structure comprises 305 residues: Pseudouridine-5'-phosphate glycosidase (305 aa).

Residue glutamate 28 is the Proton donor of the active site. Positions 89 and 109 each coordinate substrate. A Mn(2+)-binding site is contributed by aspartate 141. 143–145 contacts substrate; that stretch reads SAD. Lysine 162 (nucleophile) is an active-site residue.

This sequence belongs to the pseudouridine-5'-phosphate glycosidase family. In terms of assembly, homotrimer. The cofactor is Mn(2+).

It carries out the reaction D-ribose 5-phosphate + uracil = psi-UMP + H2O. Catalyzes the reversible cleavage of pseudouridine 5'-phosphate (PsiMP) to ribose 5-phosphate and uracil. Functions biologically in the cleavage direction, as part of a pseudouridine degradation pathway. This is Pseudouridine-5'-phosphate glycosidase from Dinoroseobacter shibae (strain DSM 16493 / NCIMB 14021 / DFL 12).